A 399-amino-acid polypeptide reads, in one-letter code: Fe-coproporphyrin III synthase (399 aa).

Residues 36-253 form the Radical SAM core domain; sequence KDKKPVVVWN…TRKLHEKGFP (218 aa). [4Fe-4S] cluster contacts are provided by Cys50, Cys54, and Cys57.

Belongs to the radical SAM superfamily. Requires [4Fe-4S] cluster as cofactor.

The catalysed reaction is 12,18-didecarboxysiroheme + 2 AH2 + 2 S-adenosyl-L-methionine = Fe-coproporphyrin III + 2 5'-deoxyadenosine + 2 L-methionine + 2 acetate + 2 A + 2 H(+). It participates in porphyrin-containing compound metabolism; protoheme biosynthesis. In terms of biological role, involved in siroheme-dependent heme b biosynthesis. Catalyzes the conversion of didecarboxysiroheme into Fe-coproporphyrin III by oxidative loss of two acetic acid side chains. This is Fe-coproporphyrin III synthase from Methanosarcina barkeri (strain Fusaro / DSM 804).